A 150-amino-acid polypeptide reads, in one-letter code: Linear element protein rec25 (150 aa).

S11 is modified (phosphoserine).

In terms of assembly, component of linear elements (LinEs), which are similar to synaptonemal complexes, at least composed of rec27, rec25, rec10 and mug20. Interacts with rec10; the interaction is direct.

It is found in the cytoplasm. The protein resides in the nucleus. Its subcellular location is the chromosome. Functionally, during meiotic DNA recombination, binds to and may help activate DNA double-strand break (DSB) hotspot sites. This chain is Linear element protein rec25, found in Schizosaccharomyces pombe (strain 972 / ATCC 24843) (Fission yeast).